The chain runs to 388 residues: MAEDGLPKIYSHPPAESTKTTTEATIFFGADNTIPKSETTITSEGDHVTSVNDYMLENDFSTTTGNKLIPPKERQKSEDDVESHLEKEFATLMDIKNPMANESITENFLPVKTGNISSTDAISLIDFSTDIAKEDILLDTIDPGDKDVSLTSEVSGTPKESTAAIADTPILPNIMGKSDVSNYSSSVKFKVPADGNAHITDSSVPEAEITPTTERNLTTIPDITALTEEKITEIDLILPENDPNVVPKLTDSDEEKFITVFELTTTAERDKDNPEDALLTDEESTDEVSVWMERDMANEEESHSVLLTAVESRYDFVIPASVTMNLTEDLLTEEDLPENNRMESVTKNTDELSGTTPDLDAFSHKEDNFTTETGVFKLLKEEPDEFLI.

The disordered stretch occupies residues methionine 1–threonine 20. Position 280 is a phosphothreonine; by CK2 (threonine 280). Serine 312 and serine 344 each carry phosphoserine.

It localises to the cytoplasm. The protein resides in the mitochondrion inner membrane. Its subcellular location is the cell projection. It is found in the cilium. The protein localises to the flagellum. It localises to the cytoplasmic vesicle. The protein resides in the secretory vesicle. Its subcellular location is the acrosome. Functionally, calcium-binding protein. Essential for maintaining the structural integrity of the sperm flagella. The polypeptide is Calcium-binding and spermatid-specific protein 1 (CABS1) (Bos taurus (Bovine)).